Here is a 293-residue protein sequence, read N- to C-terminus: Elongation factor Ts (293 aa).

The interval T79–V82 is involved in Mg(2+) ion dislocation from EF-Tu. At S149 the chain carries Phosphoserine.

It belongs to the EF-Ts family.

The protein resides in the cytoplasm. Its function is as follows. Associates with the EF-Tu.GDP complex and induces the exchange of GDP to GTP. It remains bound to the aminoacyl-tRNA.EF-Tu.GTP complex up to the GTP hydrolysis stage on the ribosome. In Bacillus subtilis (strain 168), this protein is Elongation factor Ts (tsf).